A 253-amino-acid chain; its full sequence is uncharacterized protein (253 aa).

Over residues 1–14 the composition is skewed to low complexity; that stretch reads MKVPILSRLRSLSS. Disordered regions lie at residues 1 to 192 and 212 to 253; these read MKVP…PKSS and PETV…AIQL. Basic and acidic residues-rich tracts occupy residues 17-30 and 45-60; these read RNNEEKNVDMEHQV and KSDKNNKHDKHDKSGE. Composition is skewed to low complexity over residues 63–104 and 111–154; these read PSTP…GSDS and KTLS…QTPR. Positions 215–235 are enriched in polar residues; the sequence is VVTSTPRQQSRPPSAQNTPNF. The segment covering 236–253 has biased composition (low complexity); it reads TSQGGSRSTSRRQSAIQL.

This is an uncharacterized protein from Dictyostelium discoideum (Social amoeba).